The chain runs to 100 residues: Integration host factor subunit beta (100 aa).

It belongs to the bacterial histone-like protein family. In terms of assembly, heterodimer of an alpha and a beta chain.

Functionally, this protein is one of the two subunits of integration host factor, a specific DNA-binding protein that functions in genetic recombination as well as in transcriptional and translational control. This Rhodospirillum rubrum (strain ATCC 11170 / ATH 1.1.1 / DSM 467 / LMG 4362 / NCIMB 8255 / S1) protein is Integration host factor subunit beta.